We begin with the raw amino-acid sequence, 113 residues long: UPF0122 protein LAF_1235 (113 aa).

This sequence belongs to the UPF0122 family.

Might take part in the signal recognition particle (SRP) pathway. This is inferred from the conservation of its genetic proximity to ftsY/ffh. May be a regulatory protein. The chain is UPF0122 protein LAF_1235 from Limosilactobacillus fermentum (strain NBRC 3956 / LMG 18251) (Lactobacillus fermentum).